Reading from the N-terminus, the 540-residue chain is T-complex protein 1 subunit delta (540 aa).

Low complexity predominate over residues M1–A12. Residues M1 to V32 are disordered. Residues G18–S31 show a composition bias toward basic and acidic residues.

It belongs to the TCP-1 chaperonin family. In terms of assembly, heterooligomeric complex of about 850 to 900 kDa that forms two stacked rings, 12 to 16 nm in diameter.

It is found in the cytoplasm. Molecular chaperone; assists the folding of proteins upon ATP hydrolysis. Known to play a role, in vitro, in the folding of actin and tubulin. This Caenorhabditis elegans protein is T-complex protein 1 subunit delta (cct-4).